The primary structure comprises 139 residues: MRIMGLDVGSKTVGVAISDPLGFTAQGLEIIPIDEEKNSFGFERLSELVKQYQVDKFVVGLPKNMNNTSGPRVEASQAYGKKIEDLFHIPVVYQDERLTTVQAERMLIEQADISRGKRKKVIDKLAAQLILQNYLDRTF.

This sequence belongs to the YqgF nuclease family.

The protein localises to the cytoplasm. Its function is as follows. Could be a nuclease involved in processing of the 5'-end of pre-16S rRNA. The chain is Putative pre-16S rRNA nuclease from Streptococcus uberis (strain ATCC BAA-854 / 0140J).